The sequence spans 692 residues: Proprotein convertase subtilisin/kexin type 9 (692 aa).

The signal sequence occupies residues 1–30 (MGTVSSRRSWWPLPLLLLLLLLLGPAGARA). A propeptide spanning residues 31–152 (QEDEDGDYEE…IEEDSSVFAQ (122 aa)) is cleaved from the precursor. The residue at position 38 (Tyr-38) is a Sulfotyrosine. Ser-47 carries the post-translational modification Phosphoserine. Residues 77–149 (TYVVVLKEET…VDYIEEDSSV (73 aa)) form the Inhibitor I9 domain. The region spanning 155-461 (PWNLERITPP…GWQLFCRTVW (307 aa)) is the Peptidase S8 domain. Active-site charge relay system residues include Asp-186 and His-226. 2 disulfides stabilise this stretch: Cys-223–Cys-255 and Cys-323–Cys-358. Ser-386 serves as the catalytic Charge relay system. The interval 450–692 (GAGWQLFCRT…HLAQASQELQ (243 aa)) is C-terminal domain. 3 disulfide bridges follow: Cys-457-Cys-527, Cys-477-Cys-526, and Cys-486-Cys-509. Asn-533 carries an N-linked (GlcNAc...) asparagine glycan. 6 disulfide bridges follow: Cys-534-Cys-601, Cys-552-Cys-600, Cys-562-Cys-588, Cys-608-Cys-679, Cys-626-Cys-678, and Cys-635-Cys-654. Position 688 is a phosphoserine (Ser-688).

Belongs to the peptidase S8 family. In terms of assembly, monomer. Can self-associate to form dimers and higher multimers which may have increased LDLR degrading activity. The precursor protein but not the mature protein may form multimers. Interacts with APOB, VLDLR, LRP8/APOER2 and BACE1. The full-length immature form (pro-PCSK9) interacts with SCNN1A, SCNN1B and SCNN1G. The pro-PCSK9 form (via C-terminal domain) interacts with LDLR. Interacts (via the C-terminal domain) with ANXA2 (via repeat Annexin 1); the interaction inhibits the degradation of LDLR. The cofactor is Ca(2+). In terms of processing, cleavage by furin and PCSK5 generates a truncated inactive protein that is unable to induce LDLR degradation. Post-translationally, undergoes autocatalytic cleavage in the endoplasmic reticulum to release the propeptide from the N-terminus and the cleavage of the propeptide is strictly required for its maturation and activation. The cleaved propeptide however remains associated with the catalytic domain through non-covalent interactions, preventing potential substrates from accessing its active site. As a result, it is secreted from cells as a propeptide-containing, enzymatically inactive protein. Phosphorylation protects the propeptide against proteolysis.

Its subcellular location is the cytoplasm. It localises to the secreted. The protein localises to the endosome. The protein resides in the lysosome. It is found in the cell surface. Its subcellular location is the endoplasmic reticulum. It localises to the golgi apparatus. Its proteolytic activity is autoinhibited by the non-covalent binding of the propeptide to the catalytic domain. Inhibited by EGTA. Crucial player in the regulation of plasma cholesterol homeostasis. Binds to low-density lipid receptor family members: low density lipoprotein receptor (LDLR), very low density lipoprotein receptor (VLDLR), apolipoprotein E receptor (LRP1/APOER) and apolipoprotein receptor 2 (LRP8/APOER2), and promotes their degradation in intracellular acidic compartments. Acts via a non-proteolytic mechanism to enhance the degradation of the hepatic LDLR through a clathrin LDLRAP1/ARH-mediated pathway. May prevent the recycling of LDLR from endosomes to the cell surface or direct it to lysosomes for degradation. Can induce ubiquitination of LDLR leading to its subsequent degradation. Inhibits intracellular degradation of APOB via the autophagosome/lysosome pathway in a LDLR-independent manner. Involved in the disposal of non-acetylated intermediates of BACE1 in the early secretory pathway. Inhibits epithelial Na(+) channel (ENaC)-mediated Na(+) absorption by reducing ENaC surface expression primarily by increasing its proteasomal degradation. Regulates neuronal apoptosis via modulation of LRP8/APOER2 levels and related anti-apoptotic signaling pathways. This is Proprotein convertase subtilisin/kexin type 9 (PCSK9) from Pan troglodytes (Chimpanzee).